A 209-amino-acid polypeptide reads, in one-letter code: Translation initiation factor IF-3 (209 aa).

Belongs to the IF-3 family. As to quaternary structure, monomer.

The protein localises to the cytoplasm. In terms of biological role, IF-3 binds to the 30S ribosomal subunit and shifts the equilibrium between 70S ribosomes and their 50S and 30S subunits in favor of the free subunits, thus enhancing the availability of 30S subunits on which protein synthesis initiation begins. This Chlorobium phaeobacteroides (strain DSM 266 / SMG 266 / 2430) protein is Translation initiation factor IF-3.